The sequence spans 611 residues: Probable cysteine desulfurase 1 (611 aa).

The cargo-loading domain stretch occupies residues 1-208; sequence MRATQLYAAS…HEMVDVFDIQ (208 aa). At Lys-428 the chain carries N6-(pyridoxal phosphate)lysine. The active-site Cysteine persulfide intermediate is Cys-566.

Belongs to the class-V pyridoxal-phosphate-dependent aminotransferase family. Csd subfamily. There are 1-2 copies of this protein in each type 2A encapsulin shell. Pyridoxal 5'-phosphate serves as cofactor.

The protein resides in the encapsulin nanocompartment. It catalyses the reaction (sulfur carrier)-H + L-cysteine = (sulfur carrier)-SH + L-alanine. Functionally, cargo protein of a type 2A encapsulin nanocompartment involved in sulfur metabolism. Cysteine desulfurases mobilize the sulfur from L-cysteine to yield L-alanine, an essential step in sulfur metabolism for biosynthesis of a variety of sulfur-containing biomolecules. The chain is Probable cysteine desulfurase 1 from Mycobacterium leprae (strain TN).